A 419-amino-acid chain; its full sequence is MASAFSKLLTGRNASLLFTTLGTSALTTGYLLNRQKVSADAREQHKLFPPSADYPDLRKHNNCMAECLTPTIYAKLRNKMTPSGYTLDQCIQTGVDNPGHPFIKTVGMVAGDEESYEVFADLFDPVIKLRHNGYDPRLMKHPADLDASKITHGQFDERYVLSSRVRTGRSIRGLSLPPACSRAERREVENVAITALGGLKGDLAGRYYKLSEMTEQDQQRLIDDHFLFDKPVSPLLTCAGMARDWPDARGIWHNYDKTFLIWINEEDHTRVISMEKGGNMKRVFERFCRGLKEVERLIQERGWEFMWNERLGYILTCPSNLGTGLRAGVHVRIPKLSKDPRFSKILENLRLQKRGTGGVDTAAVADVYDISNIDRIGRSEVELVQIVIDGVNYLVDCEKKLERGQDIKVPPPLPQFGRK.

Residues 1-39 (MASAFSKLLTGRNASLLFTTLGTSALTTGYLLNRQKVSA) constitute a mitochondrion transit peptide. Residues 40 to 64 (DAREQHKLFPPSADYPDLRKHNNCM) are cardiolipin-binding. In terms of domain architecture, Phosphagen kinase N-terminal spans 46–132 (KLFPPSADYP…FDPVIKLRHN (87 aa)). Residues 159–401 (YVLSSRVRTG…NYLVDCEKKL (243 aa)) form the Phosphagen kinase C-terminal domain. ATP-binding positions include 162–166 (SSRVR) and histidine 225. Tyrosine 255 carries the post-translational modification Phosphotyrosine. ATP-binding positions include arginine 270, arginine 326, 354–359 (RGTGGV), and aspartate 369. At threonine 356 the chain carries Phosphothreonine.

Belongs to the ATP:guanido phosphotransferase family. As to quaternary structure, exists as an octamer composed of four CKMT2 homodimers. In terms of tissue distribution, sarcomere-specific. Found only in heart and skeletal muscles.

It is found in the mitochondrion inner membrane. The enzyme catalyses creatine + ATP = N-phosphocreatine + ADP + H(+). Reversibly catalyzes the transfer of phosphate between ATP and various phosphogens (e.g. creatine phosphate). Creatine kinase isoenzymes play a central role in energy transduction in tissues with large, fluctuating energy demands, such as skeletal muscle, heart, brain and spermatozoa. The chain is Creatine kinase S-type, mitochondrial (Ckmt2) from Rattus norvegicus (Rat).